The primary structure comprises 347 residues: Trace amine-associated receptor 4 (347 aa).

At 1–37 (MNSPDLWYSPETQFCFAAANNSCPRKARPALVVCAMY) the chain is on the extracellular side. N20 carries an N-linked (GlcNAc...) asparagine glycan. Disulfide bonds link C23–C187 and C106–C191. The chain crosses the membrane as a helical span at residues 38-58 (LVMIGAIVMTMLGNMVVIISI). Over 59–69 (AHFKQLHSPTN) the chain is Cytoplasmic. The chain crosses the membrane as a helical span at residues 70-90 (FLILSMATTDFLLSCVVMPFS). Residues 91–110 (MVRSIESCWYFGDLFCKVHS) are Extracellular-facing. Residues 111 to 129 (CCDIMLCTTSIFHLCFISV) form a helical membrane-spanning segment. Residues 130–149 (DRHYAVCDPLHYVTQITVGV) are Cytoplasmic-facing. A helical membrane pass occupies residues 150-170 (VGVFLLISWSVPILFAFGLVF). Over 171 to 197 (SELNLIGAEDFVAAIDCTGLCVLIFNK) the chain is Extracellular. The extracellular Loop 2 (ECL2) stretch occupies residues 175–188 (LIGAEDFVAAIDCT). A helical transmembrane segment spans residues 198 to 218 (LWGVLASFIAFFLPGAIMVGI). The Cytoplasmic portion of the chain corresponds to 219–260 (YIHIFTVARKHARKIGPGPRTKRALSESKMKATSGKESKATK). Residues 261 to 281 (TLSIVMGVFVLCWLPFFVLTI) traverse the membrane as a helical segment. Topologically, residues 282-296 (TDPFIGFTTPEDLYN) are extracellular. The helical transmembrane segment at 297 to 317 (VFLWLGYFNSTFNPIIYGMFY) threads the bilayer. Over 318–347 (PWFRKALRMIVTGTIFRSDSSTSSLHPAHP) the chain is Cytoplasmic.

Belongs to the G-protein coupled receptor 1 family.

The protein localises to the cell membrane. In terms of biological role, olfactory receptor specific for 2-phenylethylamine, a trace amine present at high concentration in the urine of carnivore species, playing a key role in fear and avoidance responses. 2-phenylethylamine acts as a kairomone in the chemical detection of carnivore odor and triggers fear in rats. This receptor is probably mediated by the G(s)-class of G-proteins which activate adenylate cyclase. The sequence is that of Trace amine-associated receptor 4 from Rattus norvegicus (Rat).